The following is a 389-amino-acid chain: Phospho-N-acetylmuramoyl-pentapeptide-transferase (389 aa).

10 consecutive transmembrane segments (helical) span residues 25–45, 73–93, 97–117, 135–155, 190–210, 222–242, 259–279, 287–307, 311–331, and 366–386; these read RAVM…PAVI, TMGG…WADL, FIWI…VDDY, FWQS…VSEA, ISYP…IVGA, GLVI…AYVM, AGEL…FLWF, FMGD…AVIV, IVLF…MLQV, and QVVV…LSTL.

The protein belongs to the glycosyltransferase 4 family. MraY subfamily. Mg(2+) is required as a cofactor.

It is found in the cell inner membrane. The enzyme catalyses UDP-N-acetyl-alpha-D-muramoyl-L-alanyl-gamma-D-glutamyl-meso-2,6-diaminopimeloyl-D-alanyl-D-alanine + di-trans,octa-cis-undecaprenyl phosphate = di-trans,octa-cis-undecaprenyl diphospho-N-acetyl-alpha-D-muramoyl-L-alanyl-D-glutamyl-meso-2,6-diaminopimeloyl-D-alanyl-D-alanine + UMP. Its pathway is cell wall biogenesis; peptidoglycan biosynthesis. Catalyzes the initial step of the lipid cycle reactions in the biosynthesis of the cell wall peptidoglycan: transfers peptidoglycan precursor phospho-MurNAc-pentapeptide from UDP-MurNAc-pentapeptide onto the lipid carrier undecaprenyl phosphate, yielding undecaprenyl-pyrophosphoryl-MurNAc-pentapeptide, known as lipid I. The sequence is that of Phospho-N-acetylmuramoyl-pentapeptide-transferase from Paraburkholderia xenovorans (strain LB400).